The chain runs to 424 residues: N-succinylarginine dihydrolase (424 aa).

Substrate-binding positions include 19–28, N110, and 137–138; these read AGLSPGNIAS and HR. Residue E174 is part of the active site. R207 contributes to the substrate binding site. H240 is an active-site residue. D242 and N349 together coordinate substrate. Residue C355 is the Nucleophile of the active site.

This sequence belongs to the succinylarginine dihydrolase family. As to quaternary structure, homodimer.

It carries out the reaction N(2)-succinyl-L-arginine + 2 H2O + 2 H(+) = N(2)-succinyl-L-ornithine + 2 NH4(+) + CO2. It participates in amino-acid degradation; L-arginine degradation via AST pathway; L-glutamate and succinate from L-arginine: step 2/5. Its function is as follows. Catalyzes the hydrolysis of N(2)-succinylarginine into N(2)-succinylornithine, ammonia and CO(2). This is N-succinylarginine dihydrolase from Rhizorhabdus wittichii (strain DSM 6014 / CCUG 31198 / JCM 15750 / NBRC 105917 / EY 4224 / RW1) (Sphingomonas wittichii).